A 483-amino-acid chain; its full sequence is WAS/WASL-interacting protein family member 3 (483 aa).

A compositionally biased stretch (pro residues) spans 1–29 (MPVPPPPPPPLPPPPPPLGAPPPPPPSAP). The tract at residues 1–414 (MPVPPPPPPP…GGQLRNGSLH (414 aa)) is disordered. 3 consecutive short sequence motifs (profilin-binding motif) follow at residues 3-8 (VPPPPP), 11-16 (LPPPPP), and 20-25 (APPPPP). A WH2 domain is found at 45–62 (GRSALLADIQQGTRLRKV). The residue at position 46 (Arg-46) is an Asymmetric dimethylarginine. The short motif at 58–61 (RLRK) is the RLRK element. 2 stretches are compositionally biased toward polar residues: residues 63–78 (TQIN…SSKG) and 87–96 (ANTRGASTPP). Ser-149 bears the Phosphoserine mark. Residues 166–192 (PPRPNVPAPPPPTPPPPPPPLPPPLPS) show a composition bias toward pro residues. Ser-202 is modified (phosphoserine). Composition is skewed to pro residues over residues 215-239 (VAPP…PLPP) and 256-271 (HLPP…PPCG). The span at 277-288 (AEPASPAQDAQE) shows a compositional bias: low complexity. A compositionally biased stretch (pro residues) spans 289-298 (PPAPPPPLPP). Low complexity-rich tracts occupy residues 299-308 (YASCSPRASL) and 331-345 (PSFQ…AQAL). At Ser-383 the chain carries Phosphoserine. Over residues 393 to 404 (QQATAWTPTQQP) the composition is skewed to low complexity. Residues 424 to 448 (TFHSVEDFPPPDEYKPCQKIYPSKI) carry the WASP-binding motif motif. A disordered region spans residues 461 to 483 (EAVGQSSDDIKGRNSQLSLKTLR). A compositionally biased stretch (polar residues) spans 473–483 (RNSQLSLKTLR).

It belongs to the verprolin family. As to quaternary structure, interacts with WASL, and monomeric and filamentous actin.

It localises to the cytoplasm. May be a regulator of cytoskeletal organization. May have a role in spermatogenesis. In Homo sapiens (Human), this protein is WAS/WASL-interacting protein family member 3 (WIPF3).